The chain runs to 120 residues: Large ribosomal subunit protein uL18 (120 aa).

Residues 1–24 are disordered; the sequence is MITKAAKNATRKKRHARVRAKLTG. Over residues 9–20 the composition is skewed to basic residues; it reads ATRKKRHARVRA.

The protein belongs to the universal ribosomal protein uL18 family. In terms of assembly, part of the 50S ribosomal subunit; part of the 5S rRNA/L5/L18/L25 subcomplex. Contacts the 5S and 23S rRNAs.

In terms of biological role, this is one of the proteins that bind and probably mediate the attachment of the 5S RNA into the large ribosomal subunit, where it forms part of the central protuberance. This Bacillus mycoides (strain KBAB4) (Bacillus weihenstephanensis) protein is Large ribosomal subunit protein uL18.